A 786-amino-acid polypeptide reads, in one-letter code: Endonuclease MutS2 (786 aa).

An ATP-binding site is contributed by 332 to 339 (GPNTGGKT). The region spanning 711-786 (IDLRGMDSEE…GTGVTVVILK (76 aa)) is the Smr domain.

It belongs to the DNA mismatch repair MutS family. MutS2 subfamily. Homodimer. Binds to stalled ribosomes, contacting rRNA.

Endonuclease that is involved in the suppression of homologous recombination and thus may have a key role in the control of bacterial genetic diversity. In terms of biological role, acts as a ribosome collision sensor, splitting the ribosome into its 2 subunits. Detects stalled/collided 70S ribosomes which it binds and splits by an ATP-hydrolysis driven conformational change. Acts upstream of the ribosome quality control system (RQC), a ribosome-associated complex that mediates the extraction of incompletely synthesized nascent chains from stalled ribosomes and their subsequent degradation. Probably generates substrates for RQC. The polypeptide is Endonuclease MutS2 (Clostridium perfringens (strain SM101 / Type A)).